The sequence spans 1544 residues: Lysophospholipase NTE1 (1544 aa).

Residues 1–37 (MSTIEIVSTVAEYTEIHSPVSSKFLLPSARDSSSSIS) lie on the Cytoplasmic side of the membrane. Residues 38 to 58 (LFSAIFWFWSWLFFKIMNIFL) traverse the membrane as a helical segment. The Lumenal portion of the chain corresponds to 59-76 (YYIPNIIVNLFSVNFQIT). A helical membrane pass occupies residues 77–97 (LSLSSIVITLTGIISFCFLIV). Residues 98 to 1544 (RYKYLTRYSK…RKSLYRRSSI (1447 aa)) are Cytoplasmic-facing. Disordered regions lie at residues 265-312 (RLFS…RNYP) and 424-552 (ESPS…EETE). Polar residues predominate over residues 275-310 (NPASNPLSPDNTGSKSFDPLSSGNFNDTSLSSSDRN). The span at 425–447 (SPSVSINKTSSSSSSLPKKSTTS) shows a compositional bias: low complexity. 2 stretches are compositionally biased toward polar residues: residues 448 to 458 (LRPLNRNQSSR) and 517 to 536 (QISS…TTKF). Positions 537 to 546 (ENIRDRTFSD) are enriched in basic and acidic residues. A nucleoside 3',5'-cyclic phosphate contacts are provided by residues 681-811 (SFES…LKSL) and 807-960 (KLKS…VANK). Residues 1237–1401 (LVLGGGGSRG…LDNLPVMEMK (165 aa)) form the PNPLA domain. Positions 1241 to 1246 (GGGSRG) match the GXGXXG motif. Positions 1268–1272 (GTSIG) match the GXSXG motif. Ser-1270 acts as the Nucleophile in catalysis. The Proton acceptor role is filled by Asp-1388. The DGA/G signature appears at 1388–1390 (DGG).

Belongs to the NTE family.

The protein localises to the endoplasmic reticulum membrane. The catalysed reaction is a 1-acyl-sn-glycero-3-phosphocholine + H2O = sn-glycerol 3-phosphocholine + a fatty acid + H(+). Inhibited by organophosphorus esters. Functionally, intracellular phospholipase B that catalyzes the double deacylation of phosphatidylcholine (PC) to glycerophosphocholine (GroPCho). Plays an important role in membrane lipid homeostasis. Responsible for the rapid PC turnover in response to inositol, elevated temperatures, or when choline is present in the growth medium. The polypeptide is Lysophospholipase NTE1 (NTE1) (Debaryomyces hansenii (strain ATCC 36239 / CBS 767 / BCRC 21394 / JCM 1990 / NBRC 0083 / IGC 2968) (Yeast)).